Reading from the N-terminus, the 44-residue chain is Thymosin beta-4 (44 aa).

Over residues methionine 1 to glutamate 25 the composition is skewed to basic and acidic residues. The disordered stretch occupies residues methionine 1–serine 44. Serine 2 is subject to N-acetylserine. Serine 2 is modified (phosphoserine). Lysine 4 is modified (N6-acetyllysine). At lysine 12 the chain carries N6-acetyllysine; alternate. Lysine 12 participates in a covalent cross-link: Glycyl lysine isopeptide (Lys-Gly) (interchain with G-Cter in SUMO2); alternate. Threonine 23 is subject to Phosphothreonine. Lysine 26 bears the N6-acetyllysine mark. A Phosphoserine modification is found at serine 31. Residue lysine 32 is modified to N6-acetyllysine. Over residues glutamate 33–serine 44 the composition is skewed to basic and acidic residues. Threonine 34 is subject to Phosphothreonine. Lysine 39 is modified (N6-acetyllysine).

Belongs to the thymosin beta family. Identified in a complex composed of ACTA1, COBL, GSN AND TMSB4X. Interacts with SERPINB1. Post-translationally, acSDKP is inactivated by ACE, which removes the dipeptide Lys-Pro from its C-terminus.

Its subcellular location is the cytoplasm. The protein localises to the cytoskeleton. Its function is as follows. Plays an important role in the organization of the cytoskeleton. Binds to and sequesters actin monomers (G actin) and therefore inhibits actin polymerization. Functionally, potent inhibitor of bone marrow derived stem cell differentiation. Acts by inhibits the entry of hematopoietic pluripotent stem cells into the S-phase. In Bos taurus (Bovine), this protein is Thymosin beta-4 (TMSB4).